Reading from the N-terminus, the 150-residue chain is Ribosome maturation factor RimP (150 aa).

It belongs to the RimP family.

Its subcellular location is the cytoplasm. Functionally, required for maturation of 30S ribosomal subunits. In Thermotoga maritima (strain ATCC 43589 / DSM 3109 / JCM 10099 / NBRC 100826 / MSB8), this protein is Ribosome maturation factor RimP.